The following is a 205-amino-acid chain: Regulator of G-protein signaling 4 (205 aa).

Residues Cys2, Cys12, and Cys95 are each lipidated (S-palmitoyl cysteine). One can recognise an RGS domain in the interval 62–178; that stretch reads SLENLISHEC…LKSRFYLDLV (117 aa).

Post-translationally, palmitoylated on Cys-2 and/or Cys-12. Phosphorylated by cyclic GMP-dependent protein kinase. As to expression, expressed in brain and heart. Expressed in brain at protein level. Expressed in prefontal and visual cortex. Isoform 4 and isoform 5 are expressed ubiquitously. Isoform 1, isoform 2 and isoform 3 are not expressed in the cerebellum.

Its function is as follows. Inhibits signal transduction by increasing the GTPase activity of G protein alpha subunits thereby driving them into their inactive GDP-bound form. Activity on G(z)-alpha is inhibited by phosphorylation of the G-protein. Activity on G(z)-alpha and G(i)-alpha-1 is inhibited by palmitoylation of the G-protein. In Homo sapiens (Human), this protein is Regulator of G-protein signaling 4 (RGS4).